A 461-amino-acid polypeptide reads, in one-letter code: Porin AaxA (461 aa).

The N-terminal stretch at 1 to 22 is a signal peptide; it reads MSFRSVLLTALLSLSFTTTMQA.

The protein belongs to the OprB family.

It is found in the cell outer membrane. Facilitates L-arginine uptake, as part of the AaxABC system. The arginine uptake by the bacterium in the macrophage may be a virulence factor against the host innate immune response. The polypeptide is Porin AaxA (aaxA) (Chlamydia trachomatis serovar L2 (strain ATCC VR-902B / DSM 19102 / 434/Bu)).